A 523-amino-acid chain; its full sequence is Light-independent protochlorophyllide reductase subunit B (523 aa).

Position 36 (aspartate 36) interacts with [4Fe-4S] cluster. The active-site Proton donor is aspartate 290. 425–426 (GL) provides a ligand contact to substrate.

Belongs to the ChlB/BchB/BchZ family. In terms of assembly, protochlorophyllide reductase is composed of three subunits; ChlL, ChlN and ChlB. Forms a heterotetramer of two ChlB and two ChlN subunits. Requires [4Fe-4S] cluster as cofactor.

It catalyses the reaction chlorophyllide a + oxidized 2[4Fe-4S]-[ferredoxin] + 2 ADP + 2 phosphate = protochlorophyllide a + reduced 2[4Fe-4S]-[ferredoxin] + 2 ATP + 2 H2O. It participates in porphyrin-containing compound metabolism; chlorophyll biosynthesis (light-independent). Its function is as follows. Component of the dark-operative protochlorophyllide reductase (DPOR) that uses Mg-ATP and reduced ferredoxin to reduce ring D of protochlorophyllide (Pchlide) to form chlorophyllide a (Chlide). This reaction is light-independent. The NB-protein (ChlN-ChlB) is the catalytic component of the complex. This is Light-independent protochlorophyllide reductase subunit B from Prochlorococcus marinus (strain MIT 9215).